A 37-amino-acid polypeptide reads, in one-letter code: Mu-cyrtautoxin-As1a (37 aa).

Intrachain disulfides connect C1/C15, C8/C19, C14/C35, and C26/C31.

The protein belongs to the neurotoxin 13 (insecticidal toxin ABC) family. 01 (Aps III) subfamily. In terms of tissue distribution, expressed by the venom gland.

The protein localises to the secreted. Functionally, the recombinant mu-cyrtautoxin-As1a potently and voltage-independently blocks voltage-gated sodium channels (Nav) of insects. It acts by pluging the outer vestibule of the channel. It acts in combination with a weak (30%) voltage-independent block of insect voltage-gated calcium (Cav) channels (low-voltage and high-voltage channels). Tested on DUM neurons, it inhibits sodium currents with an IC(50) of 540 nM (and a Hill coefficient &gt;1, reflecting an incomplete block at higher concentrations). In vivo, it induces flaccid paralysis in adult Australian sheep blowfly Lucilia cuprina. It is both paralytic and lethal, when injected into lepidopteran larvae. It is a slower acting toxin, being lethal at 24 hours, but not paralytic at 1 hour post-injection. The chain is Mu-cyrtautoxin-As1a from Apomastus schlingeri (Trap-door spider).